The following is a 1651-amino-acid chain: Alsin (1651 aa).

RCC1 repeat units follow at residues 59–108 (DGEV…AVTE), 109–167 (SGVV…ALSL), and 169–218 (REIW…ALVQ). The interval 425–462 (ETAAQSGSASTGPESLKDLREEQVKQESLQGKKSSSLM) is disordered. The segment covering 427–437 (AAQSGSASTGP) has biased composition (polar residues). Basic and acidic residues predominate over residues 439–449 (SLKDLREEQVK). Positions 450 to 461 (QESLQGKKSSSL) are enriched in polar residues. Phosphoserine is present on residues S459, S460, S477, and S486. Position 504 is a phosphothreonine (T504). 2 RCC1 repeats span residues 519-570 (RTEV…ALTA) and 572-621 (SQVY…FLVD). At K527 the chain carries N6-acetyllysine. The DH domain maps to 684-879 (GYIASLHELA…ESLALHLGKK (196 aa)). The 107-residue stretch at 895–1001 (GKMTDSLRKP…RAISQAVDQA (107 aa)) folds into the PH domain. 8 MORN repeats span residues 1043 to 1065 (YDGRWLSGKPHGRGVLKWPDGKM), 1066 to 1088 (YSGMFRNGLEDGYGEYRIPNKAL), 1094 to 1116 (YVGHWKEGKMCGQGVYSYASGEV), 1117 to 1139 (FEGCFQDNMRHGHGLLRSGKLTS), 1145 to 1167 (FIGQWVMDKKAGYGVFDDITRGE), 1169 to 1191 (YMGMWQDDVCQGNGVVVTQFGLY), 1192 to 1214 (YEGNFHLNKMMGNGVLLSEDDTI), and 1215 to 1238 (YEGEFSDDWTLSGKGTLTMPHGDY). S1329 is subject to Phosphoserine. Residues 1507–1651 (KQPDIALLGF…YFQIQREKLN (145 aa)) enclose the VPS9 domain.

In terms of assembly, forms a heteromeric complex with ALS2CL. Interacts with ALS2CL.

Functionally, may act as a GTPase regulator. Controls survival and growth of spinal motoneurons. The chain is Alsin (Als2) from Mus musculus (Mouse).